Consider the following 136-residue polypeptide: Large ribosomal subunit protein uL16 (136 aa).

Belongs to the universal ribosomal protein uL16 family. In terms of assembly, part of the 50S ribosomal subunit.

Functionally, binds 23S rRNA and is also seen to make contacts with the A and possibly P site tRNAs. The sequence is that of Large ribosomal subunit protein uL16 from Vibrio vulnificus (strain YJ016).